The following is a 505-amino-acid chain: MIDQETDGIEKLETGIPGFDFLSDGGLPLGRATLIAGTAGSAKTIFASQFLVEGIQRGENGVFVTFEEPPKALRKNMRGFGWDIQQWENEGKWVFVDASPQPGDRPIVSGEYDLGALIARIEHAVRKYKASRISLDSLGAIFSHLSDSAQVRSDLFRLASALRELGVTAIMTAERVEEYGEISRYGVEEFVADNVVIVRNVLADEKRRRTIEILKYRGTDHQKGEFPFTIINKKGIVIIPLSAIELEQKSSDIRITSGSEELDRMCGSGFFRDSIILVSGATGTGKTLMVTEFMDGGVANGERCLVFAFEESREQLIRNATGWGVDFKQMEKEGKLKVVCRYPETTNLENHLIMMKDIIQEFKPNRVAVDSLSALERVSTLKSFREFIIGLTSFIKQQEIGGLFTSTTPNLLGGASITDAHISTITDSIILLRYVEMYGEMRRGITVLKMRGSMHDKDIREFSIDHQGMHIGKPFRNVTGILAGTPMYTAQSEVERLSGLFDEKI.

2 consecutive KaiC domains span residues glutamate 10–aspartate 252 and isoleucine 253–threonine 485. A Phosphoserine; by autocatalysis modification is found at serine 423. At threonine 424 the chain carries Phosphothreonine; by autocatalysis.

Belongs to the KaiC family. In terms of assembly, multimerizes, probably forming homohexamers, no interaction with KaiC1 or KaiC2 is seen. In another study forms hexamers, interacts with KaiB1, KaiB3, and KaiC1. Post-translationally, autophosphorylates and dephosphorylates. Dephosphorylation of KaiC3 was higher at 25 than at 30 or 35 degrees Celsius.

It catalyses the reaction L-seryl-[protein] + ATP = O-phospho-L-seryl-[protein] + ADP + H(+). It carries out the reaction L-threonyl-[protein] + ATP = O-phospho-L-threonyl-[protein] + ADP + H(+). The catalysed reaction is ATP + H2O = ADP + phosphate + H(+). ATPase activity is influenced by KaiB1 and KaiB3 in vitro; ATPase is reduced 35% by the KaiB1 tetramer and 55% by the KaiB3 monomer but not affected by KaiA or the KaiB3 tetramer. Seems to be linked to dark adaption of Synechocystis cells, but is not as essential as the core oscillator KaiAB1C1 for the circadian cycle. KaiB3 and KaiC3 may cross talk with the core oscillator. Autophosphorylates and dephosphorylates independently of KaiA. Has a weak ATPase, hydrolyzes 8.5 ATP/monomer/day, has no detectable ATP synthesis activity. ATPase activity reduced 55% by KaiB3 monomer but not the KaiB3 tetramer or KaiA in vitro, reduced 35% by KaiB1 tetramer. The chain is Circadian clock protein KaiC3 from Synechocystis sp. (strain ATCC 27184 / PCC 6803 / Kazusa).